Reading from the N-terminus, the 613-residue chain is Zinc finger CCCH domain-containing protein 59 (613 aa).

The tract at residues 275-296 (NTTLSPYISPAKSVPVEETPKR) is disordered. 2 consecutive C3H1-type zinc fingers follow at residues 318–346 (AGGN…HDEE) and 350–378 (HYNR…HSLS).

The chain is Zinc finger CCCH domain-containing protein 59 from Oryza sativa subsp. japonica (Rice).